Reading from the N-terminus, the 450-residue chain is tRNA modification GTPase MnmE (450 aa).

(6S)-5-formyl-5,6,7,8-tetrahydrofolate is bound by residues arginine 21, glutamate 80, and lysine 119. Residues 213–373 form the TrmE-type G domain; that stretch reads GIKVVIIGKP…LEEEIIKSVK (161 aa). Asparagine 223 provides a ligand contact to K(+). Residues 223–228, 242–248, and 267–270 contribute to the GTP site; these read NVGKST, TDIPGTT, and DTAG. A Mg(2+)-binding site is contributed by serine 227. K(+)-binding residues include threonine 242, isoleucine 244, and threonine 247. Threonine 248 contributes to the Mg(2+) binding site. Residue lysine 450 participates in (6S)-5-formyl-5,6,7,8-tetrahydrofolate binding.

This sequence belongs to the TRAFAC class TrmE-Era-EngA-EngB-Septin-like GTPase superfamily. TrmE GTPase family. In terms of assembly, homodimer. Heterotetramer of two MnmE and two MnmG subunits. K(+) serves as cofactor.

It is found in the cytoplasm. Functionally, exhibits a very high intrinsic GTPase hydrolysis rate. Involved in the addition of a carboxymethylaminomethyl (cmnm) group at the wobble position (U34) of certain tRNAs, forming tRNA-cmnm(5)s(2)U34. This is tRNA modification GTPase MnmE from Pseudothermotoga lettingae (strain ATCC BAA-301 / DSM 14385 / NBRC 107922 / TMO) (Thermotoga lettingae).